A 275-amino-acid polypeptide reads, in one-letter code: NH(3)-dependent NAD(+) synthetase (275 aa).

Glycine 46–serine 53 contacts ATP. Residue aspartate 52 coordinates Mg(2+). Residue arginine 140 participates in deamido-NAD(+) binding. An ATP-binding site is contributed by threonine 160. Glutamate 165 is a binding site for Mg(2+). Positions 173 and 180 each coordinate deamido-NAD(+). Residues lysine 189 and threonine 211 each contribute to the ATP site. Position 260–261 (histidine 260–lysine 261) interacts with deamido-NAD(+).

Belongs to the NAD synthetase family. Homodimer.

The enzyme catalyses deamido-NAD(+) + NH4(+) + ATP = AMP + diphosphate + NAD(+) + H(+). It functions in the pathway cofactor biosynthesis; NAD(+) biosynthesis; NAD(+) from deamido-NAD(+) (ammonia route): step 1/1. Catalyzes the ATP-dependent amidation of deamido-NAD to form NAD. Uses ammonia as a nitrogen source. This Escherichia coli O7:K1 (strain IAI39 / ExPEC) protein is NH(3)-dependent NAD(+) synthetase.